Consider the following 188-residue polypeptide: Elongation factor P (188 aa).

K34 bears the N6-(3,6-diaminohexanoyl)-5-hydroxylysine mark.

Belongs to the elongation factor P family. May be beta-lysylated on the epsilon-amino group of Lys-34 by the combined action of EpmA and EpmB, and then hydroxylated on the C5 position of the same residue by EpmC (if this protein is present). Lysylation is critical for the stimulatory effect of EF-P on peptide-bond formation. The lysylation moiety may extend toward the peptidyltransferase center and stabilize the terminal 3-CCA end of the tRNA. Hydroxylation of the C5 position on Lys-34 may allow additional potential stabilizing hydrogen-bond interactions with the P-tRNA.

The protein resides in the cytoplasm. The protein operates within protein biosynthesis; polypeptide chain elongation. In terms of biological role, involved in peptide bond synthesis. Alleviates ribosome stalling that occurs when 3 or more consecutive Pro residues or the sequence PPG is present in a protein, possibly by augmenting the peptidyl transferase activity of the ribosome. Modification of Lys-34 is required for alleviation. This Xanthomonas oryzae pv. oryzae (strain MAFF 311018) protein is Elongation factor P.